Here is a 529-residue protein sequence, read N- to C-terminus: Peptide chain release factor 3 (529 aa).

One can recognise a tr-type G domain in the interval 11–280; the sequence is AKRRTFAIIS…GLVEWAPAPM (270 aa). GTP is bound by residues 20–27, 88–92, and 142–145; these read SHPDAGKT, DTPGH, and NKLD.

Belongs to the TRAFAC class translation factor GTPase superfamily. Classic translation factor GTPase family. PrfC subfamily.

Its subcellular location is the cytoplasm. Functionally, increases the formation of ribosomal termination complexes and stimulates activities of RF-1 and RF-2. It binds guanine nucleotides and has strong preference for UGA stop codons. It may interact directly with the ribosome. The stimulation of RF-1 and RF-2 is significantly reduced by GTP and GDP, but not by GMP. In Klebsiella pneumoniae subsp. pneumoniae (strain ATCC 700721 / MGH 78578), this protein is Peptide chain release factor 3.